We begin with the raw amino-acid sequence, 877 residues long: Translation initiation factor IF-2 (877 aa).

A compositionally biased stretch (basic and acidic residues) spans 66 to 115 (PKKESTAKKTTKKDEVKKEEKKTTTKKESKNPAKAVSEKKDEVKKEEKQP). 3 disordered regions span residues 66–127 (PKKE…LEEK), 187–208 (SDESLKRKKKEKKNHPVASKKE), and 241–290 (ENKP…KESE). The segment covering 192 to 201 (KRKKKEKKNH) has biased composition (basic residues). A compositionally biased stretch (polar residues) spans 245–265 (AQPTNKKQPNILKQSLNNSIN). A tr-type G domain is found at 376–543 (QRAPVITIMG…IVLLQADILE (168 aa)). The interval 385–392 (GHVDHGKT) is G1. 385-392 (GHVDHGKT) serves as a coordination point for GTP. Residues 410 to 414 (GITQH) form a G2 region. The tract at residues 431 to 434 (DTPG) is G3. GTP is bound by residues 431–435 (DTPGH) and 485–488 (NKMD). The tract at residues 485–488 (NKMD) is G4. Residues 521 to 523 (SAK) form a G5 region.

Belongs to the TRAFAC class translation factor GTPase superfamily. Classic translation factor GTPase family. IF-2 subfamily.

Its subcellular location is the cytoplasm. One of the essential components for the initiation of protein synthesis. Protects formylmethionyl-tRNA from spontaneous hydrolysis and promotes its binding to the 30S ribosomal subunits. Also involved in the hydrolysis of GTP during the formation of the 70S ribosomal complex. This Campylobacter lari (strain RM2100 / D67 / ATCC BAA-1060) protein is Translation initiation factor IF-2.